Here is a 662-residue protein sequence, read N- to C-terminus: DNA topoisomerase 4 subunit B (662 aa).

Residues tyrosine 20, asparagine 60, aspartate 87, 129-135 (GLHGVGV), and lysine 359 contribute to the ATP site. The Toprim domain occupies 439–553 (TELFIVEGDS…DGHLYLAKPP (115 aa)). Mg(2+) contacts are provided by glutamate 445, aspartate 518, and aspartate 520.

This sequence belongs to the type II topoisomerase family. ParE type 1 subfamily. As to quaternary structure, heterotetramer composed of ParC and ParE. Requires Mg(2+) as cofactor. Mn(2+) serves as cofactor. Ca(2+) is required as a cofactor.

The enzyme catalyses ATP-dependent breakage, passage and rejoining of double-stranded DNA.. In terms of biological role, topoisomerase IV is essential for chromosome segregation. It relaxes supercoiled DNA. Performs the decatenation events required during the replication of a circular DNA molecule. In Rickettsia bellii (strain RML369-C), this protein is DNA topoisomerase 4 subunit B.